The chain runs to 260 residues: Eukaryotic translation initiation factor 3 subunit G-2 (260 aa).

One can recognise an RRM domain in the interval 180 to 258 (CAVRISNLSE…LILSVEWSKP (79 aa)).

This sequence belongs to the eIF-3 subunit G family. Component of the eukaryotic translation initiation factor 3 (eIF-3) complex. The eIF-3 complex interacts with pix.

It localises to the cytoplasm. Its function is as follows. RNA-binding component of the eukaryotic translation initiation factor 3 (eIF-3) complex, which is involved in protein synthesis of a specialized repertoire of mRNAs and, together with other initiation factors, stimulates binding of mRNA and methionyl-tRNAi to the 40S ribosome. The eIF-3 complex specifically targets and initiates translation of a subset of mRNAs involved in cell proliferation. This subunit can bind 18S rRNA. This Drosophila grimshawi (Hawaiian fruit fly) protein is Eukaryotic translation initiation factor 3 subunit G-2.